Reading from the N-terminus, the 525-residue chain is M-phase inducer phosphatase 1 (525 aa).

Residues 1-42 (MELGPEPPHRRRLLFTCSPTPAPQPTGKVQFGASRAGGLSPV) form a disordered region. Positions 74-84 (MGSSESTDSGF) match the Phosphodegron motif. Residue Ser76 is modified to Phosphoserine; by CHEK1. A phosphoserine; by NEK11 mark is found at Ser79, Ser82, and Ser88. At Ser124 the chain carries Phosphoserine; by CHEK1 and CHEK2. The KEN box motif lies at 141 to 143 (KEN). A Phosphoserine; by CHEK1 modification is found at Ser178. The segment at 260–318 (FDSPSPCSSTSSCSTRAVKRADRSHEESPRGTKRRKSSEASPVKADVPEPTQLPHQSLS) is disordered. Low complexity predominate over residues 262–274 (SPSPCSSTSSCST). A compositionally biased stretch (basic and acidic residues) spans 278-289 (KRADRSHEESPR). A phosphoserine; by CHEK1 and CHEK2 mark is found at Ser283 and Ser296. One can recognise a Rhodanese domain in the interval 377–483 (LIKEFVIIDC…FFLKCQSHCE (107 aa)). Residue Cys432 is part of the active site. Thr508 is modified (phosphothreonine; by CHEK1). Phosphoserine; by PLK3 occurs at positions 514 and 520.

The protein belongs to the MPI phosphatase family. As to quaternary structure, interacts with CCNB1/cyclin B1. Interacts with YWHAE/14-3-3 epsilon when phosphorylated. Interacts with CUL1 specifically when CUL1 is neddylated and active. Interacts with BTRC/BTRCP1 and FBXW11/BTRCP2. Interactions with CUL1, BTRC and FBXW11 are enhanced upon DNA damage. Interacts with CHEK2; mediates CDC25A phosphorylation and degradation in response to infrared-induced DNA damages. Interacts with HSP90AB1; prevents heat shock-mediated CDC25A degradation and contributes to cell cycle progression. Post-translationally, phosphorylated by CHEK1 on Ser-76, Ser-124, Ser-178, Ser-283, Ser-296 and Thr-508 during checkpoint mediated cell cycle arrest. Also phosphorylated by CHEK2 on Ser-124, Ser-283, and Ser-296 during checkpoint mediated cell cycle arrest. Phosphorylation on Ser-178 and Thr-508 creates binding sites for YWHAE/14-3-3 epsilon which inhibits CDC25A. Phosphorylation on Ser-76, Ser-124, Ser-178, Ser-283 and Ser-296 may also promote ubiquitin-dependent proteolysis of CDC25A by the SCF complex. Phosphorylation of CDC25A at Ser-76 by CHEK1 primes it for subsequent phosphorylation at Ser-79, Ser-82 and Ser-88 by NEK11. Phosphorylation by NEK11 is required for BTRC-mediated polyubiquitination and degradation. Phosphorylation by PIM1 leads to an increase in phosphatase activity. Phosphorylated by PLK3 following DNA damage, leading to promote its ubiquitination and degradation. Ubiquitinated by the anaphase promoting complex/cyclosome (APC/C) ubiquitin ligase complex that contains FZR1/CDH1 during G1 phase leading to its degradation by the proteasome. Ubiquitinated by a SCF complex containing BTRC and FBXW11 during S phase leading to its degradation by the proteasome. Deubiquitination by USP17L2/DUB3 leads to its stabilization.

It catalyses the reaction O-phospho-L-tyrosyl-[protein] + H2O = L-tyrosyl-[protein] + phosphate. With respect to regulation, stimulated by B-type cyclins. Stimulated by PIM1-mediated phosphorylation. Its function is as follows. Tyrosine protein phosphatase which functions as a dosage-dependent inducer of mitotic progression. Directly dephosphorylates CDK1 and stimulates its kinase activity. Also dephosphorylates CDK2 in complex with cyclin-E, in vitro. This is M-phase inducer phosphatase 1 (Cdc25a) from Rattus norvegicus (Rat).